Here is a 740-residue protein sequence, read N- to C-terminus: Autotransporter adhesin BtaE (740 aa).

The first 11 residues, 1-11 (MFGLSVNHAYA), serve as a signal peptide directing secretion. A surface exposed passenger domain region spans residues 12–647 (GPGIFINDGT…LQTLDQANAY (636 aa)). The tract at residues 648–686 (TDKKFGKLNEDIVATRIEARQAAAIGLAAASLRYDDRPG) is outer membrane translocation of the passenger domain. 4 beta stranded membrane-spanning segments follow: residues 686 to 696 (GKISAAIGGGF), 700 to 710 (EGAVALGLGHT), 719 to 725 (NLSAATS), and 728 to 739 (NWGMGAGFSYTF). The interval 687-740 (KISAAIGGGFWRGEGAVALGLGHTSEDQRMRSNLSAATSGGNWGMGAGFSYTFN) is translocator domain.

It belongs to the autotransporter-2 (AT-2) (TC 1.B.40) family. Homotrimer.

It localises to the cell surface. Its subcellular location is the cell outer membrane. Its function is as follows. Binds to hyaluronic acid and epithelial cells, and is required for full virulence in the mouse model. The protein is Autotransporter adhesin BtaE of Brucella suis biovar 1 (strain 1330).